A 353-amino-acid chain; its full sequence is GTPase Obg (353 aa).

The Obg domain maps to 1 to 159 (MKFLDEAKVY…RWIWLRLKLI (159 aa)). Residues 160 to 327 (ADAGLVGLPN…ALRALVAVIG (168 aa)) form the OBG-type G domain. GTP contacts are provided by residues 166-173 (GLPNAGKS), 191-195 (FTTLH), 212-215 (DIPG), 279-282 (NKID), and 308-310 (SGV). Residues S173 and T193 each contribute to the Mg(2+) site.

The protein belongs to the TRAFAC class OBG-HflX-like GTPase superfamily. OBG GTPase family. As to quaternary structure, monomer. The cofactor is Mg(2+).

It localises to the cytoplasm. An essential GTPase which binds GTP, GDP and possibly (p)ppGpp with moderate affinity, with high nucleotide exchange rates and a fairly low GTP hydrolysis rate. Plays a role in control of the cell cycle, stress response, ribosome biogenesis and in those bacteria that undergo differentiation, in morphogenesis control. In Rhodopseudomonas palustris (strain ATCC BAA-98 / CGA009), this protein is GTPase Obg.